The chain runs to 261 residues: Enolase-phosphatase E1 (261 aa).

D16 and E18 together coordinate Mg(2+). Residues S153–S154 and K187 each bind substrate. D212 is a binding site for Mg(2+).

It belongs to the HAD-like hydrolase superfamily. MasA/MtnC family. As to quaternary structure, monomer. It depends on Mg(2+) as a cofactor.

The protein resides in the cytoplasm. Its subcellular location is the nucleus. It carries out the reaction 5-methylsulfanyl-2,3-dioxopentyl phosphate + H2O = 1,2-dihydroxy-5-(methylsulfanyl)pent-1-en-3-one + phosphate. It functions in the pathway amino-acid biosynthesis; L-methionine biosynthesis via salvage pathway; L-methionine from S-methyl-5-thio-alpha-D-ribose 1-phosphate: step 3/6. It participates in amino-acid biosynthesis; L-methionine biosynthesis via salvage pathway; L-methionine from S-methyl-5-thio-alpha-D-ribose 1-phosphate: step 4/6. Functionally, bifunctional enzyme that catalyzes the enolization of 2,3-diketo-5-methylthiopentyl-1-phosphate (DK-MTP-1-P) into the intermediate 2-hydroxy-3-keto-5-methylthiopentenyl-1-phosphate (HK-MTPenyl-1-P), which is then dephosphorylated to form the acireductone 1,2-dihydroxy-3-keto-5-methylthiopentene (DHK-MTPene). The chain is Enolase-phosphatase E1 (enoph1) from Danio rerio (Zebrafish).